A 633-amino-acid polypeptide reads, in one-letter code: 1-deoxy-D-xylulose-5-phosphate synthase (633 aa).

Thiamine diphosphate contacts are provided by residues His-72 and 113–115 (GHS). Asp-144 is a binding site for Mg(2+). Thiamine diphosphate-binding positions include 145–146 (GA), Asn-173, Tyr-284, and Glu-367. Asn-173 serves as a coordination point for Mg(2+).

The protein belongs to the transketolase family. DXPS subfamily. Homodimer. Requires Mg(2+) as cofactor. It depends on thiamine diphosphate as a cofactor.

The catalysed reaction is D-glyceraldehyde 3-phosphate + pyruvate + H(+) = 1-deoxy-D-xylulose 5-phosphate + CO2. It participates in metabolic intermediate biosynthesis; 1-deoxy-D-xylulose 5-phosphate biosynthesis; 1-deoxy-D-xylulose 5-phosphate from D-glyceraldehyde 3-phosphate and pyruvate: step 1/1. Functionally, catalyzes the acyloin condensation reaction between C atoms 2 and 3 of pyruvate and glyceraldehyde 3-phosphate to yield 1-deoxy-D-xylulose-5-phosphate (DXP). The polypeptide is 1-deoxy-D-xylulose-5-phosphate synthase (Lysinibacillus sphaericus (strain C3-41)).